The chain runs to 49 residues: Large ribosomal subunit protein bL36 (49 aa).

Belongs to the bacterial ribosomal protein bL36 family.

This chain is Large ribosomal subunit protein bL36, found in Delftia acidovorans (strain DSM 14801 / SPH-1).